Consider the following 160-residue polypeptide: Transcriptional regulator MraZ (160 aa).

2 SpoVT-AbrB domains span residues Lys5–Val50 and Ala93–Val136.

Belongs to the MraZ family. Forms oligomers.

It localises to the cytoplasm. Its subcellular location is the nucleoid. In Geobacter sp. (strain M21), this protein is Transcriptional regulator MraZ.